We begin with the raw amino-acid sequence, 1696 residues long: PH domain leucine-rich repeat protein phosphatase 1 (1696 aa).

Residue Met1 is modified to N-acetylmethionine. Disordered regions lie at residues 1 to 97 (MEPA…GGGA) and 222 to 398 (LGHG…VVGE). The span at 79-92 (VPQPAAGGAAPVTA) shows a compositional bias: low complexity. A compositionally biased stretch (polar residues) spans 313-325 (DTESFSLSPSAES). Position 378 is a phosphoserine (Ser378). A PH domain is found at 499-599 (RIQLSGMYNV…WLRQVSKVAS (101 aa)). LRR repeat units lie at residues 601-622 (RISSVDLSCCSLEHLPANLFYS), 624-645 (DLTHLNLKQNFLRQNPSLPAAR), 655-676 (KLKSLNLSNNHLGAFPSAVCSI), 678-699 (TLAELNVSCNALQEVPAAVGAM), 701-722 (NLQTFLLDGNFLQSLPAELENM), 724-746 (QLSYLGLSFNEFTDIPEVLEKLT), 836-857 (FLKALYASSNELVQLDVYPVPN), 858-879 (YLSYMDVSRNCLESVPEWVCES), 881-902 (KLEVLDIGHNQICELPARLFCN), 904-925 (SLRKLLAGHNRLARLPERLERT), 926-947 (SVEVLDVQHNQIIELPPNLLMK), 950-971 (SLRFLNASANKLETLPPATLSE), 976-996 (ILQELYLTNNSLTDKCVPLLT), 1000-1021 (RLKILHMAYNRLQSFPASKMAK), 1024-1045 (ELEEIDISGNKLKAIPTTIMNC), 1047-1068 (RMHTVIAHSNCIEVFPEVMQLP), 1069-1090 (EVKCVDLSCNELSEITLPENLP), and 1092-1113 (KLQELDLTGNPRLALDHKSLEL). The region spanning 1138 to 1385 (SHGYTEASGV…DSISAVVVQL (248 aa)) is the PPM-type phosphatase domain. Residues Asp1173, Gly1174, Lys1337, and Asp1376 each coordinate Mn(2+). Disordered regions lie at residues 1422 to 1473 (RPSD…SPAY) and 1610 to 1696 (KPGG…DTPL). 3 stretches are compositionally biased toward low complexity: residues 1431-1452 (SSSSGMASEISSELSTSEMSSE), 1647-1660 (QQQQQQQQQQQQQQ), and 1670-1680 (QAQAQAQAQAQ). Residues 1694-1696 (TPL) carry the PDZ-binding motif.

In terms of assembly, interacts with the nucleotide free form of K-Ras (KRAS) via its LRR repeats. Interacts with AKT2, AKT3 and PRKCB isoform beta-II. Interacts with WDR48 and USP12. Mn(2+) is required as a cofactor. As to expression, mainly present in brain (at protein level). Isoform 2 is more abundant in adult brain neurons than isoform 1 in. Isoforms 1 and 2 are expressed in the retina but not found in rod outer segments.

Its subcellular location is the cytoplasm. It localises to the membrane. The protein resides in the cell membrane. It is found in the nucleus. The protein localises to the nucleoplasm. Its subcellular location is the nucleus membrane. It catalyses the reaction O-phospho-L-seryl-[protein] + H2O = L-seryl-[protein] + phosphate. The catalysed reaction is O-phospho-L-threonyl-[protein] + H2O = L-threonyl-[protein] + phosphate. With respect to regulation, insensitive to okadaic acid. Deubiquitination by WDR48-USP12 complex positively regulates PHLPP1 stability. Its function is as follows. Protein phosphatase involved in regulation of Akt and PKC signaling. Mediates dephosphorylation in the C-terminal domain hydrophobic motif of members of the AGC Ser/Thr protein kinase family; specifically acts on 'Ser-473' of AKT2 and AKT3, 'Ser-660' of PRKCB and 'Ser-657' of PRKCA. Isoform 2 seems to have a major role in regulating Akt signaling in hippocampal neurons while isoform 1 may promote Akt and PKC activation and inhibit ERK signaling. Akt regulates the balance between cell survival and apoptosis through a cascade that primarily alters the function of transcription factors that regulate pro- and antiapoptotic genes. Dephosphorylation of 'Ser-473' of Akt triggers apoptosis and suppression of tumor growth. Dephosphorylation of PRKCA and PRKCB leads to their destabilization and degradation. Dephosphorylates STK4 on 'Thr-387' leading to STK4 activation and apoptosis. Dephosphorylates RPS6KB1 and is involved in regulation of cap-dependent translation. Inhibits cancer cell proliferation and may act as a tumor suppressor. Dephosphorylates RAF1 inhibiting its kinase activity. May act as a negative regulator of K-Ras signaling in membrane rafts. Involved in the hippocampus-dependent long-term memory formation. Involved in circadian control by regulating the consolidation of circadian periodicity after resetting. Involved in development and function of regulatory T-cells. This chain is PH domain leucine-rich repeat protein phosphatase 1 (Phlpp1), found in Rattus norvegicus (Rat).